A 421-amino-acid polypeptide reads, in one-letter code: Phosphatidate cytidylyltransferase 1 (421 aa).

Methionine 1 carries the N-acetylmethionine modification. Over residues 1-12 (MEEENVTSSPST) the composition is skewed to polar residues. The disordered stretch occupies residues 1 to 26 (MEEENVTSSPSTPVHRLRHRRRSNEV). The next 8 membrane-spanning stretches (helical) occupy residues 60–80 (IGGF…MVVV), 102–122 (LPYI…FVYG), 149–169 (YHMA…ILTL), 183–203 (WTHM…ANIF), 206–226 (IFWF…AYIF), 246–266 (GFIG…NILG), 321–341 (LCLG…ASGF), and 369–389 (VMAV…SVSV).

Belongs to the CDS family. The cofactor is Mg(2+).

Its subcellular location is the membrane. It carries out the reaction a 1,2-diacyl-sn-glycero-3-phosphate + CTP + H(+) = a CDP-1,2-diacyl-sn-glycerol + diphosphate. The protein operates within phospholipid metabolism; CDP-diacylglycerol biosynthesis; CDP-diacylglycerol from sn-glycerol 3-phosphate: step 3/3. Its function is as follows. May be involved in the synthesis of minor phospholipids and in modulation of IP3-mediated signal transduction. This chain is Phosphatidate cytidylyltransferase 1, found in Arabidopsis thaliana (Mouse-ear cress).